A 287-amino-acid polypeptide reads, in one-letter code: ATP synthase gamma chain (287 aa).

Belongs to the ATPase gamma chain family. F-type ATPases have 2 components, CF(1) - the catalytic core - and CF(0) - the membrane proton channel. CF(1) has five subunits: alpha(3), beta(3), gamma(1), delta(1), epsilon(1). CF(0) has three main subunits: a, b and c.

It is found in the cell inner membrane. Produces ATP from ADP in the presence of a proton gradient across the membrane. The gamma chain is believed to be important in regulating ATPase activity and the flow of protons through the CF(0) complex. This is ATP synthase gamma chain from Xylella fastidiosa (strain M23).